Reading from the N-terminus, the 476-residue chain is Protein DETOXIFICATION 17 (476 aa).

Helical transmembrane passes span 29-51 (LWLS…ISVM), 70-90 (FASV…ETLC), 111-131 (FVLL…EQIL), 140-160 (IASV…AYGL), 177-197 (VFVC…LFVL), 205-225 (GAAL…SCYV), 252-272 (IAFP…LLVL), 286-306 (VLSI…GLGG), 326-346 (LAVY…VTVL), 363-383 (IIAY…LDGL), 405-425 (LGSY…HFHI), and 431-451 (WLGI…VTIF).

The protein belongs to the multi antimicrobial extrusion (MATE) (TC 2.A.66.1) family.

The protein localises to the membrane. This chain is Protein DETOXIFICATION 17, found in Arabidopsis thaliana (Mouse-ear cress).